The primary structure comprises 109 residues: Transcription initiation factor IIA subunit 2 (109 aa).

This sequence belongs to the TFIIA subunit 2 family. As to quaternary structure, TFIIA is a heterodimer composed of the large toa1 and the small toa2 subunits.

It localises to the nucleus. The protein localises to the cytoplasm. Its function is as follows. TFIIA is a component of the transcription machinery of RNA polymerase II and plays an important role in transcriptional activation. TFIIA in a complex with tbp mediates transcriptional activity. This chain is Transcription initiation factor IIA subunit 2 (toa2), found in Schizosaccharomyces pombe (strain 972 / ATCC 24843) (Fission yeast).